Consider the following 132-residue polypeptide: UPF0102 protein Acel_1550 (132 aa).

This sequence belongs to the UPF0102 family.

The sequence is that of UPF0102 protein Acel_1550 from Acidothermus cellulolyticus (strain ATCC 43068 / DSM 8971 / 11B).